Here is a 669-residue protein sequence, read N- to C-terminus: UvrABC system protein B (669 aa).

The Helicase ATP-binding domain occupies 26-183 (EGLEDGLAHQ…RRLADLQYTR (158 aa)). 39–46 (GVTGSGKT) is a binding site for ATP. A Beta-hairpin motif is present at residues 92-115 (YYDYYQPEAYVPSSDTFIEKDASV). The 163-residue stretch at 431–593 (QVDDLLSEIR…IVPKGLNKKI (163 aa)) folds into the Helicase C-terminal domain. The UVR domain maps to 629–664 (EKEIQRLETEMYQHAKDLEFEKAAQTRDKLQTLRAQ).

The protein belongs to the UvrB family. Forms a heterotetramer with UvrA during the search for lesions. Interacts with UvrC in an incision complex.

The protein localises to the cytoplasm. The UvrABC repair system catalyzes the recognition and processing of DNA lesions. A damage recognition complex composed of 2 UvrA and 2 UvrB subunits scans DNA for abnormalities. Upon binding of the UvrA(2)B(2) complex to a putative damaged site, the DNA wraps around one UvrB monomer. DNA wrap is dependent on ATP binding by UvrB and probably causes local melting of the DNA helix, facilitating insertion of UvrB beta-hairpin between the DNA strands. Then UvrB probes one DNA strand for the presence of a lesion. If a lesion is found the UvrA subunits dissociate and the UvrB-DNA preincision complex is formed. This complex is subsequently bound by UvrC and the second UvrB is released. If no lesion is found, the DNA wraps around the other UvrB subunit that will check the other stand for damage. The polypeptide is UvrABC system protein B (Proteus mirabilis (strain HI4320)).